The chain runs to 131 residues: Methylglyoxal synthase (131 aa).

The MGS-like domain maps to 1–131; sequence MKIALIAHDK…GDLDYRKFRK (131 aa). Substrate-binding positions include histidine 8, lysine 12, 34–37, and 54–55; these read TGTT and SG. The active-site Proton donor/acceptor is aspartate 60. A substrate-binding site is contributed by histidine 87.

Belongs to the methylglyoxal synthase family.

It carries out the reaction dihydroxyacetone phosphate = methylglyoxal + phosphate. Its function is as follows. Catalyzes the formation of methylglyoxal from dihydroxyacetone phosphate. The protein is Methylglyoxal synthase of Bacillus cytotoxicus (strain DSM 22905 / CIP 110041 / 391-98 / NVH 391-98).